The sequence spans 776 residues: 3-isopropylmalate dehydratase (776 aa).

[4Fe-4S] cluster-binding residues include Cys357, Cys418, and Cys421. The span at 482–493 (SAPKVEVRHDTD) shows a compositional bias: basic and acidic residues. Disordered regions lie at residues 482-518 (SAPK…SDVA) and 525-544 (DIPV…SADA). Polar residues predominate over residues 527–538 (PVSNSSTQSPGS).

The protein belongs to the aconitase/IPM isomerase family. Monomer. It depends on [4Fe-4S] cluster as a cofactor.

It carries out the reaction (2R,3S)-3-isopropylmalate = (2S)-2-isopropylmalate. It functions in the pathway amino-acid biosynthesis; L-leucine biosynthesis; L-leucine from 3-methyl-2-oxobutanoate: step 2/4. Catalyzes the isomerization between 2-isopropylmalate and 3-isopropylmalate, via the formation of 2-isopropylmaleate. This is 3-isopropylmalate dehydratase (LEU1) from Eremothecium gossypii (strain ATCC 10895 / CBS 109.51 / FGSC 9923 / NRRL Y-1056) (Yeast).